A 185-amino-acid polypeptide reads, in one-letter code: Ribosome-recycling factor (185 aa).

The protein belongs to the RRF family.

It is found in the cytoplasm. Responsible for the release of ribosomes from messenger RNA at the termination of protein biosynthesis. May increase the efficiency of translation by recycling ribosomes from one round of translation to another. The protein is Ribosome-recycling factor of Aliivibrio salmonicida (strain LFI1238) (Vibrio salmonicida (strain LFI1238)).